We begin with the raw amino-acid sequence, 148 residues long: MFQGETAITVDDKGRMAVPTAYRDLVARVSGNRLVLTYNPFEAGCLWLYAEKEWERVRDDVMSKPNTQRVVRTLQQKLVGSSAVLELDANGRLSIPASHRNAVGIEKKAVLLGMGDKFELWSEQAHRALIQQTLSDGDLGDELLDLRL.

2 SpoVT-AbrB domains span residues 5–53 (ETAI…AEKE) and 82–125 (SAVL…SEQA).

The protein belongs to the MraZ family. In terms of assembly, forms oligomers.

The protein localises to the cytoplasm. Its subcellular location is the nucleoid. This chain is Transcriptional regulator MraZ, found in Xanthomonas axonopodis pv. citri (strain 306).